The sequence spans 359 residues: Protein LpfD (359 aa).

The N-terminal stretch at Met1 to Ala24 is a signal peptide.

Belongs to the fimbrial protein family.

The protein localises to the fimbrium. The polypeptide is Protein LpfD (lpfD) (Salmonella typhimurium (strain LT2 / SGSC1412 / ATCC 700720)).